Here is a 218-residue protein sequence, read N- to C-terminus: Deoxyribose-phosphate aldolase (218 aa).

Aspartate 92 functions as the Proton donor/acceptor in the catalytic mechanism. The Schiff-base intermediate with acetaldehyde role is filled by lysine 155. Lysine 184 functions as the Proton donor/acceptor in the catalytic mechanism.

It belongs to the DeoC/FbaB aldolase family. DeoC type 1 subfamily.

The protein resides in the cytoplasm. It catalyses the reaction 2-deoxy-D-ribose 5-phosphate = D-glyceraldehyde 3-phosphate + acetaldehyde. The protein operates within carbohydrate degradation; 2-deoxy-D-ribose 1-phosphate degradation; D-glyceraldehyde 3-phosphate and acetaldehyde from 2-deoxy-alpha-D-ribose 1-phosphate: step 2/2. Functionally, catalyzes a reversible aldol reaction between acetaldehyde and D-glyceraldehyde 3-phosphate to generate 2-deoxy-D-ribose 5-phosphate. The sequence is that of Deoxyribose-phosphate aldolase from Clostridium kluyveri (strain NBRC 12016).